Here is a 123-residue protein sequence, read N- to C-terminus: Large ribosomal subunit protein uL14 (123 aa).

Belongs to the universal ribosomal protein uL14 family. Part of the 50S ribosomal subunit. Forms a cluster with proteins L3 and L19. In the 70S ribosome, L14 and L19 interact and together make contacts with the 16S rRNA in bridges B5 and B8.

Functionally, binds to 23S rRNA. Forms part of two intersubunit bridges in the 70S ribosome. This is Large ribosomal subunit protein uL14 from Koribacter versatilis (strain Ellin345).